Here is a 288-residue protein sequence, read N- to C-terminus: Prepilin leader peptidase/N-methyltransferase (288 aa).

The chain crosses the membrane as a helical span at residues 14–34 (FITLATVLGLLVGSFLNVVVY). Residues cysteine 71, cysteine 74, cysteine 96, and cysteine 99 each contribute to the Zn(2+) site. 6 helical membrane passes run 103–123 (ISVR…VVAW), 127–147 (ASVE…LSLI), 158–178 (IVLP…WVPL), 182–202 (VCGA…FKLV), 227–247 (VLPL…VYLL), and 254–274 (MGTA…AVLW).

It belongs to the peptidase A24 family. Zn(2+) is required as a cofactor.

It is found in the cell inner membrane. It catalyses the reaction Typically cleaves a -Gly-|-Phe- bond to release an N-terminal, basic peptide of 5-8 residues from type IV prepilin, and then N-methylates the new N-terminal amino group, the methyl donor being S-adenosyl-L-methionine.. Its function is as follows. Plays an essential role in type IV pili and type II pseudopili formation by proteolytically removing the leader sequence from substrate proteins and subsequently monomethylating the alpha-amino group of the newly exposed N-terminal phenylalanine. This chain is Prepilin leader peptidase/N-methyltransferase (pilD), found in Pseudomonas putida (Arthrobacter siderocapsulatus).